The primary structure comprises 1004 residues: UPF0182 protein Mflv_4654 (1004 aa).

A run of 7 helical transmembrane segments spans residues 18-38, 63-83, 114-134, 176-196, 211-231, 260-280, and 288-308; these read FLIAVSAVLVLLLLLGPRFID, LVIFFVVAILVGAVVFAGLAL, LIGIGVPLAIGVLAGFVGQSY, FVGVFLAFLANLLGHYLFGGI, IQLITLVGLLMLLKAVAYWFD, KLILMAIAVICAVAVFSAIFL, and IGVVLLLLSSLVVGAGWPLVV. Residues 896–940 are compositionally biased toward low complexity; sequence PGADATATGPAATEPPAGQAPQTQGNNTAPPAAQPPNRQGQAPAG. Residues 896–960 form a disordered region; the sequence is PGADATATGP…TGPTQLSAAK (65 aa).

The protein belongs to the UPF0182 family.

It is found in the cell membrane. The chain is UPF0182 protein Mflv_4654 from Mycolicibacterium gilvum (strain PYR-GCK) (Mycobacterium gilvum (strain PYR-GCK)).